The primary structure comprises 490 residues: Betaine aldehyde dehydrogenase (490 aa).

Asp93 contacts K(+). 150–152 (GAW) contacts NAD(+). Catalysis depends on Lys162, which acts as the Charge relay system. Position 176-179 (176-179 (KPSE)) interacts with NAD(+). Val180 lines the K(+) pocket. 230–233 (GIAS) serves as a coordination point for NAD(+). Leu246 is a K(+) binding site. Glu252 serves as the catalytic Proton acceptor. Residues Gly254, Cys286, and Glu387 each coordinate NAD(+). Cys286 serves as the catalytic Nucleophile. Residue Cys286 is modified to Cysteine sulfenic acid (-SOH). Lys457 and Gly460 together coordinate K(+). Glu464 (charge relay system) is an active-site residue.

Belongs to the aldehyde dehydrogenase family. In terms of assembly, dimer of dimers. K(+) serves as cofactor.

The enzyme catalyses betaine aldehyde + NAD(+) + H2O = glycine betaine + NADH + 2 H(+). It functions in the pathway amine and polyamine biosynthesis; betaine biosynthesis via choline pathway; betaine from betaine aldehyde: step 1/1. Involved in the biosynthesis of the osmoprotectant glycine betaine. Catalyzes the irreversible oxidation of betaine aldehyde to the corresponding acid. The protein is Betaine aldehyde dehydrogenase of Yersinia pestis.